Here is a 301-residue protein sequence, read N- to C-terminus: Lufaxin (301 aa).

The first 23 residues, 1–23, serve as a signal peptide directing secretion; it reads MNSINFLSIVGLISFGFIVAVKC. Intrachain disulfides connect Cys52–Cys60, Cys78–Cys137, Cys102–Cys112, and Cys258–Cys265. Asn262 carries an N-linked (GlcNAc...) asparagine glycan.

As to quaternary structure, interacts with factor Xa. Associates with complement proconvertase C3b-B complex. In terms of tissue distribution, expressed in salivary glands.

Its subcellular location is the secreted. Sand fly salivary protein with antithrombotic, and anti-complement (alternative pathway) activities. Is a slow, tight, non-competitive, and reversible inhibitor of factor Xa (FXa, F10). Is specific for FXa (Kd=3.86 nM) and does not interact with non-activated FX, or all other enzymes tested. In addition, it blocks prothrombinase and increases both prothrombin time and activated partial thromboplastin time. It also prevents protease-activated receptor 2 (F2RL1, PAR2) activation by FXa. In vivo, it abrogates edema formation triggered by injection of FXa in the paw of mice. Moreover, it prevents FeCl(3)-induced carotid artery thrombus formation and prolongs activated partial thromboplastin time ex vivo, implying that it works as an anticoagulant in vivo. It also inhibits the early steps of the alternative pathway of complement by direct binding to the proconvertase C3b-B complex, by inhibiting activation of factor B and consequently the formation of the C3 convertase. The sequence is that of Lufaxin from Lutzomyia longipalpis (Sand fly).